The sequence spans 113 residues: Nucleoid-associated protein THA_1374 (113 aa).

It belongs to the YbaB/EbfC family. In terms of assembly, homodimer.

It is found in the cytoplasm. The protein resides in the nucleoid. In terms of biological role, binds to DNA and alters its conformation. May be involved in regulation of gene expression, nucleoid organization and DNA protection. The protein is Nucleoid-associated protein THA_1374 of Thermosipho africanus (strain TCF52B).